A 210-amino-acid chain; its full sequence is 7-carboxy-7-deazaguanine synthase (210 aa).

Substrate contacts are provided by residues 12 to 14 and R27; that span reads LQG. The Radical SAM core domain occupies 18–210; sequence HAGRASVFCR…VQTHKSLGIR (193 aa). Positions 31, 46, and 49 each coordinate [4Fe-4S] cluster. T51 lines the Mg(2+) pocket. Residue T90 participates in substrate binding. Residues G92, 133-135, and 173-176 contribute to the S-adenosyl-L-methionine site; these read SPK and QPMD.

This sequence belongs to the radical SAM superfamily. 7-carboxy-7-deazaguanine synthase family. In terms of assembly, homodimer. The cofactor is [4Fe-4S] cluster. It depends on S-adenosyl-L-methionine as a cofactor. Mg(2+) serves as cofactor.

It carries out the reaction 6-carboxy-5,6,7,8-tetrahydropterin + H(+) = 7-carboxy-7-deazaguanine + NH4(+). Its pathway is purine metabolism; 7-cyano-7-deazaguanine biosynthesis. Catalyzes the complex heterocyclic radical-mediated conversion of 6-carboxy-5,6,7,8-tetrahydropterin (CPH4) to 7-carboxy-7-deazaguanine (CDG), a step common to the biosynthetic pathways of all 7-deazapurine-containing compounds. In Bradyrhizobium diazoefficiens (strain JCM 10833 / BCRC 13528 / IAM 13628 / NBRC 14792 / USDA 110), this protein is 7-carboxy-7-deazaguanine synthase.